The primary structure comprises 86 residues: Large ribosomal subunit protein bL27 (86 aa).

The tract at residues 1-22 (MATKKAGGSSRNGRDSAGRRLG) is disordered.

This sequence belongs to the bacterial ribosomal protein bL27 family.

The chain is Large ribosomal subunit protein bL27 from Rickettsia rickettsii (strain Iowa).